Consider the following 49-residue polypeptide: Delta-actitoxin-Axm1h (49 aa).

Disulfide bonds link Cys4–Cys46, Cys6–Cys36, and Cys29–Cys47.

This sequence belongs to the sea anemone sodium channel inhibitory toxin family. Type I subfamily.

Its subcellular location is the secreted. It is found in the nematocyst. In terms of biological role, binds specifically to voltage-gated sodium channels (Nav) (site 3), thereby delaying their inactivation during signal transduction. Thus it may strongly stimulate mammalian cardiac muscle contraction. This is Delta-actitoxin-Axm1h from Anthopleura xanthogrammica (Giant green sea anemone).